Here is a 351-residue protein sequence, read N- to C-terminus: Dihydroorotate dehydrogenase (quinone) (351 aa).

Residues Ala67–Lys71 and Thr91 each bind FMN. Residue Lys71 coordinates substrate. Asn116–Phe120 provides a ligand contact to substrate. Residues Asn145 and Asn178 each contribute to the FMN site. Residue Asn178 coordinates substrate. Ser181 functions as the Nucleophile in the catalytic mechanism. Asn183 contacts substrate. The FMN site is built by Lys214 and Thr242. Substrate is bound at residue Asn243–Thr244. Residues Gly262, Gly291, and Tyr312–Ser313 each bind FMN.

This sequence belongs to the dihydroorotate dehydrogenase family. Type 2 subfamily. As to quaternary structure, monomer. It depends on FMN as a cofactor.

The protein localises to the cell membrane. The enzyme catalyses (S)-dihydroorotate + a quinone = orotate + a quinol. The protein operates within pyrimidine metabolism; UMP biosynthesis via de novo pathway; orotate from (S)-dihydroorotate (quinone route): step 1/1. In terms of biological role, catalyzes the conversion of dihydroorotate to orotate with quinone as electron acceptor. The sequence is that of Dihydroorotate dehydrogenase (quinone) from Helicobacter pylori (strain HPAG1).